The primary structure comprises 207 residues: Large ribosomal subunit protein uL3 (207 aa).

Residues 119–143 are disordered; the sequence is GFQGSIKRNGQHRGPMAHGSRYHRR.

It belongs to the universal ribosomal protein uL3 family. Part of the 50S ribosomal subunit. Forms a cluster with proteins L14 and L19.

Its function is as follows. One of the primary rRNA binding proteins, it binds directly near the 3'-end of the 23S rRNA, where it nucleates assembly of the 50S subunit. The chain is Large ribosomal subunit protein uL3 from Ligilactobacillus salivarius (strain UCC118) (Lactobacillus salivarius).